The sequence spans 87 residues: U3-theraphotoxin-Hhn1a 2 (87 aa).

Positions 1–24 (MVNMKASMFLTFAGLVLLFVVCYA) are cleaved as a signal peptide. Positions 25-52 (SESEEKEFPKEMLSSIFAVDDDFKQEER) are excised as a propeptide. Cystine bridges form between Cys-54/Cys-67, Cys-61/Cys-72, and Cys-66/Cys-79.

Belongs to the neurotoxin 10 (Hwtx-1) family. 51 (Hntx-8) subfamily. Hntx-8 sub-subfamily. In terms of tissue distribution, expressed by the venom gland.

It is found in the secreted. Its function is as follows. Ion channel inhibitor. In Cyriopagopus hainanus (Chinese bird spider), this protein is U3-theraphotoxin-Hhn1a 2.